The chain runs to 481 residues: Pentatricopeptide repeat-containing protein 8, mitochondrial (481 aa).

Residues 1 to 55 constitute a mitochondrion transit peptide; it reads MQGFGSQIFRKLLRSSNAKVSDALLQNTRTLFTAPPLHSGLQTSFTAETQQHVRQ. PPR repeat units follow at residues 137–172 and 365–399; these read SARF…EFLP and SIST…GLKP.

Its subcellular location is the mitochondrion. In terms of biological role, mitochondrial RNA-binding protein involved in mitochondrial translation. The cox1 mRNA is one target but it is not clear if ppr8 has a single or multiple targets. The protein is Pentatricopeptide repeat-containing protein 8, mitochondrial (ppr8) of Schizosaccharomyces pombe (strain 972 / ATCC 24843) (Fission yeast).